The chain runs to 297 residues: UBX domain-containing protein 1 (297 aa).

An N-acetylalanine modification is found at A2. The UBA domain occupies 2-42 (AELTALESLIEMGFPRGRAEKALALTGNQGIEAAMDWLMEH). Residues 38 to 212 (WLMEHEDDPD…QEPPTKREYD (175 aa)) form a disordered region. Residues 42-52 (HEDDPDVDEPL) are compositionally biased toward acidic residues. The interval 43-297 (EDDPDVDEPL…VLIVAKKCPS (255 aa)) is interaction with BRCA1. 2 stretches are compositionally biased toward basic and acidic residues: residues 86–122 (LTEEERQEQTKRMLELVAQKQREREEREEREALEREK) and 137–177 (KLQE…ERAQ). Residues 86-172 (LTEEERQEQT…RVREKIERDK (87 aa)) are a coiled coil. Position 199 is a phosphoserine (S199). S200 is subject to Phosphoserine; by MAPK12. A phosphothreonine mark is found at T207 and T229. The region spanning 209–291 (REYDQCRIQV…GLVPSAVLIV (83 aa)) is the UBX domain. S270 bears the Phosphoserine mark.

In terms of assembly, component of a complex required to couple retrotranslocation, ubiquitination and deglycosylation composed of NGLY1, SAKS1, AMFR, VCP and RAD23B. Interacts with HOMER2. Interacts directly with VCP. Interacts with BRCA1 and BARD1; interaction takes place when BRCA1 is not autoubiquitinated bur is strongly enhanced in the presence of autoubiquitinated BRCA1.

It localises to the cytoplasm. Functionally, ubiquitin-binding protein that interacts with the BRCA1-BARD1 heterodimer, and regulates its activity. Specifically binds 'Lys-6'-linked polyubiquitin chains. Interaction with autoubiquitinated BRCA1, leads to inhibit the E3 ubiquitin-protein ligase activity of the BRCA1-BARD1 heterodimer. Component of a complex required to couple deglycosylation and proteasome-mediated degradation of misfolded proteins in the endoplasmic reticulum that are retrotranslocated in the cytosol. This Rattus norvegicus (Rat) protein is UBX domain-containing protein 1 (Ubxn1).